Reading from the N-terminus, the 306-residue chain is Transcription initiation factor IIB 2 (306 aa).

The segment at 6 to 37 adopts a TFIIB-type zinc-finger fold; that stretch reads PKRVCPICGSTEFIYDPRRGEIVCAKCGYVIE. Residues Cys10, Cys13, Cys29, and Cys32 each coordinate Zn(2+). Tandem repeats lie at residues 123 to 206 and 217 to 298.

This sequence belongs to the TFIIB family.

In terms of biological role, stabilizes TBP binding to an archaeal box-A promoter. Also responsible for recruiting RNA polymerase II to the pre-initiation complex (DNA-TBP-TFIIB). This Thermococcus kodakarensis (strain ATCC BAA-918 / JCM 12380 / KOD1) (Pyrococcus kodakaraensis (strain KOD1)) protein is Transcription initiation factor IIB 2.